Reading from the N-terminus, the 116-residue chain is Large ribosomal subunit protein bL19 (116 aa).

This sequence belongs to the bacterial ribosomal protein bL19 family.

In terms of biological role, this protein is located at the 30S-50S ribosomal subunit interface and may play a role in the structure and function of the aminoacyl-tRNA binding site. This is Large ribosomal subunit protein bL19 from Clostridium novyi (strain NT).